The chain runs to 371 residues: DNA replication and repair protein RecF (371 aa).

ATP is bound at residue 30-37 (GENAQGKT).

The protein belongs to the RecF family.

The protein resides in the cytoplasm. The RecF protein is involved in DNA metabolism; it is required for DNA replication and normal SOS inducibility. RecF binds preferentially to single-stranded, linear DNA. It also seems to bind ATP. In Staphylococcus epidermidis (strain ATCC 35984 / DSM 28319 / BCRC 17069 / CCUG 31568 / BM 3577 / RP62A), this protein is DNA replication and repair protein RecF.